We begin with the raw amino-acid sequence, 242 residues long: ATP-dependent dethiobiotin synthetase BioD (242 aa).

D15–V20 contributes to the ATP binding site. T19 serves as a coordination point for Mg(2+). K40 is a catalytic residue. S44 serves as a coordination point for substrate. A Mg(2+)-binding site is contributed by E117. ATP-binding positions include E117 to G120, N178 to Q179, and P208 to S210.

Belongs to the dethiobiotin synthetase family. In terms of assembly, homodimer. Mg(2+) serves as cofactor.

It is found in the cytoplasm. It catalyses the reaction (7R,8S)-7,8-diammoniononanoate + CO2 + ATP = (4R,5S)-dethiobiotin + ADP + phosphate + 3 H(+). It functions in the pathway cofactor biosynthesis; biotin biosynthesis; biotin from 7,8-diaminononanoate: step 1/2. In terms of biological role, catalyzes a mechanistically unusual reaction, the ATP-dependent insertion of CO2 between the N7 and N8 nitrogen atoms of 7,8-diaminopelargonic acid (DAPA, also called 7,8-diammoniononanoate) to form a ureido ring. This chain is ATP-dependent dethiobiotin synthetase BioD, found in Halalkalibacterium halodurans (strain ATCC BAA-125 / DSM 18197 / FERM 7344 / JCM 9153 / C-125) (Bacillus halodurans).